We begin with the raw amino-acid sequence, 980 residues long: Valine--tRNA ligase (980 aa).

Positions 43–53 (PNVTGTLHMGH) match the 'HIGH' region motif. The 'KMSKS' region signature appears at 586–590 (KMSKS). K589 contributes to the ATP binding site. Residues 914-980 (LVDMDAERMR…AGLREQRGKL (67 aa)) adopt a coiled-coil conformation.

Belongs to the class-I aminoacyl-tRNA synthetase family. ValS type 1 subfamily. In terms of assembly, monomer.

The protein localises to the cytoplasm. The catalysed reaction is tRNA(Val) + L-valine + ATP = L-valyl-tRNA(Val) + AMP + diphosphate. In terms of biological role, catalyzes the attachment of valine to tRNA(Val). As ValRS can inadvertently accommodate and process structurally similar amino acids such as threonine, to avoid such errors, it has a 'posttransfer' editing activity that hydrolyzes mischarged Thr-tRNA(Val) in a tRNA-dependent manner. This chain is Valine--tRNA ligase, found in Xanthomonas oryzae pv. oryzae (strain PXO99A).